We begin with the raw amino-acid sequence, 197 residues long: UPF0637 protein LEUM_0496 (197 aa).

The protein belongs to the UPF0637 family.

The sequence is that of UPF0637 protein LEUM_0496 from Leuconostoc mesenteroides subsp. mesenteroides (strain ATCC 8293 / DSM 20343 / BCRC 11652 / CCM 1803 / JCM 6124 / NCDO 523 / NBRC 100496 / NCIMB 8023 / NCTC 12954 / NRRL B-1118 / 37Y).